Here is a 264-residue protein sequence, read N- to C-terminus: L-aspartate dehydrogenase (264 aa).

A120 and N186 together coordinate NAD(+). The active site involves H216.

It belongs to the L-aspartate dehydrogenase family.

The enzyme catalyses L-aspartate + NADP(+) + H2O = oxaloacetate + NH4(+) + NADPH + H(+). It carries out the reaction L-aspartate + NAD(+) + H2O = oxaloacetate + NH4(+) + NADH + H(+). It functions in the pathway cofactor biosynthesis; NAD(+) biosynthesis; iminoaspartate from L-aspartate (dehydrogenase route): step 1/1. Its function is as follows. Specifically catalyzes the NAD or NADP-dependent dehydrogenation of L-aspartate to iminoaspartate. In Serratia proteamaculans (strain 568), this protein is L-aspartate dehydrogenase.